We begin with the raw amino-acid sequence, 170 residues long: Phosphopantetheine adenylyltransferase (170 aa).

Residue T14 participates in substrate binding. Residues 14-15 and H22 each bind ATP; that span reads TF. 3 residues coordinate substrate: K46, L78, and R92. Residues 93–95, E103, and 128–134 each bind ATP; these read GLR and WLYISST.

Belongs to the bacterial CoaD family. As to quaternary structure, homohexamer. The cofactor is Mg(2+).

It localises to the cytoplasm. The catalysed reaction is (R)-4'-phosphopantetheine + ATP + H(+) = 3'-dephospho-CoA + diphosphate. It participates in cofactor biosynthesis; coenzyme A biosynthesis; CoA from (R)-pantothenate: step 4/5. Functionally, reversibly transfers an adenylyl group from ATP to 4'-phosphopantetheine, yielding dephospho-CoA (dPCoA) and pyrophosphate. The protein is Phosphopantetheine adenylyltransferase of Oleidesulfovibrio alaskensis (strain ATCC BAA-1058 / DSM 17464 / G20) (Desulfovibrio alaskensis).